Consider the following 372-residue polypeptide: 4-hydroxy-3-methylbut-2-en-1-yl diphosphate synthase (flavodoxin) (372 aa).

Positions 270, 273, 305, and 312 each coordinate [4Fe-4S] cluster.

Belongs to the IspG family. [4Fe-4S] cluster serves as cofactor.

The catalysed reaction is (2E)-4-hydroxy-3-methylbut-2-enyl diphosphate + oxidized [flavodoxin] + H2O + 2 H(+) = 2-C-methyl-D-erythritol 2,4-cyclic diphosphate + reduced [flavodoxin]. It participates in isoprenoid biosynthesis; isopentenyl diphosphate biosynthesis via DXP pathway; isopentenyl diphosphate from 1-deoxy-D-xylulose 5-phosphate: step 5/6. Converts 2C-methyl-D-erythritol 2,4-cyclodiphosphate (ME-2,4cPP) into 1-hydroxy-2-methyl-2-(E)-butenyl 4-diphosphate. The chain is 4-hydroxy-3-methylbut-2-en-1-yl diphosphate synthase (flavodoxin) from Salmonella typhi.